The primary structure comprises 193 residues: MTGPSTGPALVVGLGNPGSEYERTRHNVGFLVADVLAERVGDRFAVHKKSGADLLQARLDGRQVLIAKPRSYMNLSGRPVAALARFFSVPPTEVIVVHDELDLPFGAVRLKRGGGEGGHNGLRSISSALTTKDYLRTRIGIGRPPGRQDPADFVLKPFAAAERKEVPVIVEQAADAVELLLRVGLEAAQNQLH.

Tyr-21 provides a ligand contact to tRNA. Catalysis depends on His-26, which acts as the Proton acceptor. TRNA is bound by residues Tyr-72, Asn-74, and Asn-120.

It belongs to the PTH family. As to quaternary structure, monomer.

It is found in the cytoplasm. The enzyme catalyses an N-acyl-L-alpha-aminoacyl-tRNA + H2O = an N-acyl-L-amino acid + a tRNA + H(+). Its function is as follows. Hydrolyzes ribosome-free peptidyl-tRNAs (with 1 or more amino acids incorporated), which drop off the ribosome during protein synthesis, or as a result of ribosome stalling. In terms of biological role, catalyzes the release of premature peptidyl moieties from peptidyl-tRNA molecules trapped in stalled 50S ribosomal subunits, and thus maintains levels of free tRNAs and 50S ribosomes. This chain is Peptidyl-tRNA hydrolase, found in Nocardia farcinica (strain IFM 10152).